We begin with the raw amino-acid sequence, 372 residues long: Chaperone protein DnaJ (372 aa).

A J domain is found at 5-70 (SYYDILGVSK…KKRQAYDQFG (66 aa)). Residues 140–218 (GREYKIEIPR…CGGQGLQEKR (79 aa)) form a CR-type zinc finger. Positions 153, 156, 170, 173, 192, 195, 206, and 209 each coordinate Zn(2+). CXXCXGXG motif repeat units lie at residues 153 to 160 (CVDCNGSG), 170 to 177 (CPDCGGSG), 192 to 199 (CPTCRGKG), and 206 to 213 (CRSCGGQG).

Belongs to the DnaJ family. In terms of assembly, homodimer. Zn(2+) is required as a cofactor.

The protein resides in the cytoplasm. In terms of biological role, participates actively in the response to hyperosmotic and heat shock by preventing the aggregation of stress-denatured proteins and by disaggregating proteins, also in an autonomous, DnaK-independent fashion. Unfolded proteins bind initially to DnaJ; upon interaction with the DnaJ-bound protein, DnaK hydrolyzes its bound ATP, resulting in the formation of a stable complex. GrpE releases ADP from DnaK; ATP binding to DnaK triggers the release of the substrate protein, thus completing the reaction cycle. Several rounds of ATP-dependent interactions between DnaJ, DnaK and GrpE are required for fully efficient folding. Also involved, together with DnaK and GrpE, in the DNA replication of plasmids through activation of initiation proteins. The protein is Chaperone protein DnaJ of Leptospira interrogans serogroup Icterohaemorrhagiae serovar copenhageni (strain Fiocruz L1-130).